The primary structure comprises 637 residues: Probable potassium transport system protein Kup 2 (637 aa).

The interval Met-1–Ala-21 is disordered. Transmembrane regions (helical) follow at residues Leu-29–Phe-49, Val-68–Val-88, Leu-116–Pro-136, Val-150–Phe-170, Val-180–Leu-200, Ala-228–Val-248, Ile-258–Gly-278, Ala-300–Ile-320, Leu-359–Ala-379, Ala-381–Met-401, Leu-409–Ala-429, and Ile-434–Thr-454.

The protein belongs to the HAK/KUP transporter (TC 2.A.72) family.

Its subcellular location is the cell inner membrane. The enzyme catalyses K(+)(in) + H(+)(in) = K(+)(out) + H(+)(out). Transport of potassium into the cell. Likely operates as a K(+):H(+) symporter. This is Probable potassium transport system protein Kup 2 from Mesorhizobium japonicum (strain LMG 29417 / CECT 9101 / MAFF 303099) (Mesorhizobium loti (strain MAFF 303099)).